The following is an 84-amino-acid chain: MSEFWLCFNCCIAEQPQPKRRRRIDRSMIGEPTNFVHTAHVGSGDLFSGMNSVSSIQNQMQSKGGYGGGMPANVQMQLVDTKAG.

Residues Cys-10 and Cys-11 are each lipidated (S-palmitoyl cysteine). Positions 29–42 (IGEPTNFVHTAHVG) constitute a CRIB domain. A phosphoserine mark is found at Ser-43 and Ser-52.

The protein belongs to the CDC42SE/SPEC family. In terms of assembly, interacts with CDC42 (in GTP-bound form). Interacts weakly with RAC1 and not at all with RHOA. In terms of tissue distribution, widely expressed. Expressed at higher level in T-lymphocytes. Highly expressed in CCRF-CEM T-lymphocytes, Jurkat T-lymphocytes, and Raji B-lymphocytes compared (at protein level).

It localises to the cytoplasm. The protein resides in the cytoskeleton. It is found in the cell membrane. Its subcellular location is the cell projection. The protein localises to the phagocytic cup. Functionally, probably involved in the organization of the actin cytoskeleton by acting downstream of CDC42, inducing actin filament assembly. Alters CDC42-induced cell shape changes. In activated T-cells, may play a role in CDC42-mediated F-actin accumulation at the immunological synapse. May play a role in early contractile events in phagocytosis in macrophages. This Homo sapiens (Human) protein is CDC42 small effector protein 2 (CDC42SE2).